We begin with the raw amino-acid sequence, 346 residues long: Holliday junction branch migration complex subunit RuvB (346 aa).

A large ATPase domain (RuvB-L) region spans residues 4–185 (SDRIITASPF…FGIVSRLEFY (182 aa)). ATP-binding positions include Leu-24, Arg-25, Gly-66, Lys-69, Thr-70, Thr-71, 132 to 134 (EDY), Arg-175, Tyr-185, and Arg-222. Mg(2+) is bound at residue Thr-70. The small ATPAse domain (RuvB-S) stretch occupies residues 186–256 (TADELGKIVT…VADAALQMLD (71 aa)). A head domain (RuvB-H) region spans residues 259–346 (ATGLDVLDRK…TTVPSLFDPD (88 aa)). DNA is bound by residues Arg-295, Arg-314, and Arg-319.

The protein belongs to the RuvB family. As to quaternary structure, homohexamer. Forms an RuvA(8)-RuvB(12)-Holliday junction (HJ) complex. HJ DNA is sandwiched between 2 RuvA tetramers; dsDNA enters through RuvA and exits via RuvB. An RuvB hexamer assembles on each DNA strand where it exits the tetramer. Each RuvB hexamer is contacted by two RuvA subunits (via domain III) on 2 adjacent RuvB subunits; this complex drives branch migration. In the full resolvosome a probable DNA-RuvA(4)-RuvB(12)-RuvC(2) complex forms which resolves the HJ.

It is found in the cytoplasm. The catalysed reaction is ATP + H2O = ADP + phosphate + H(+). Its function is as follows. The RuvA-RuvB-RuvC complex processes Holliday junction (HJ) DNA during genetic recombination and DNA repair, while the RuvA-RuvB complex plays an important role in the rescue of blocked DNA replication forks via replication fork reversal (RFR). RuvA specifically binds to HJ cruciform DNA, conferring on it an open structure. The RuvB hexamer acts as an ATP-dependent pump, pulling dsDNA into and through the RuvAB complex. RuvB forms 2 homohexamers on either side of HJ DNA bound by 1 or 2 RuvA tetramers; 4 subunits per hexamer contact DNA at a time. Coordinated motions by a converter formed by DNA-disengaged RuvB subunits stimulates ATP hydrolysis and nucleotide exchange. Immobilization of the converter enables RuvB to convert the ATP-contained energy into a lever motion, pulling 2 nucleotides of DNA out of the RuvA tetramer per ATP hydrolyzed, thus driving DNA branch migration. The RuvB motors rotate together with the DNA substrate, which together with the progressing nucleotide cycle form the mechanistic basis for DNA recombination by continuous HJ branch migration. Branch migration allows RuvC to scan DNA until it finds its consensus sequence, where it cleaves and resolves cruciform DNA. This Nitrosomonas europaea (strain ATCC 19718 / CIP 103999 / KCTC 2705 / NBRC 14298) protein is Holliday junction branch migration complex subunit RuvB.